The chain runs to 323 residues: Lipoyl synthase (323 aa).

[4Fe-4S] cluster contacts are provided by Cys-65, Cys-70, Cys-76, Cys-91, Cys-95, Cys-98, and Ser-304. The 217-residue stretch at 77–293 (FNNGTATFMI…KKEALSIGFT (217 aa)) folds into the Radical SAM core domain.

It belongs to the radical SAM superfamily. Lipoyl synthase family. The cofactor is [4Fe-4S] cluster.

It localises to the cytoplasm. The enzyme catalyses [[Fe-S] cluster scaffold protein carrying a second [4Fe-4S](2+) cluster] + N(6)-octanoyl-L-lysyl-[protein] + 2 oxidized [2Fe-2S]-[ferredoxin] + 2 S-adenosyl-L-methionine + 4 H(+) = [[Fe-S] cluster scaffold protein] + N(6)-[(R)-dihydrolipoyl]-L-lysyl-[protein] + 4 Fe(3+) + 2 hydrogen sulfide + 2 5'-deoxyadenosine + 2 L-methionine + 2 reduced [2Fe-2S]-[ferredoxin]. Its pathway is protein modification; protein lipoylation via endogenous pathway; protein N(6)-(lipoyl)lysine from octanoyl-[acyl-carrier-protein]: step 2/2. In terms of biological role, catalyzes the radical-mediated insertion of two sulfur atoms into the C-6 and C-8 positions of the octanoyl moiety bound to the lipoyl domains of lipoate-dependent enzymes, thereby converting the octanoylated domains into lipoylated derivatives. The polypeptide is Lipoyl synthase (Buchnera aphidicola subsp. Acyrthosiphon pisum (strain APS) (Acyrthosiphon pisum symbiotic bacterium)).